A 466-amino-acid polypeptide reads, in one-letter code: UDP-N-acetylmuramoylalanine--D-glutamate ligase (466 aa).

115-121 (GTDGKTT) serves as a coordination point for ATP.

This sequence belongs to the MurCDEF family.

It is found in the cytoplasm. The enzyme catalyses UDP-N-acetyl-alpha-D-muramoyl-L-alanine + D-glutamate + ATP = UDP-N-acetyl-alpha-D-muramoyl-L-alanyl-D-glutamate + ADP + phosphate + H(+). It functions in the pathway cell wall biogenesis; peptidoglycan biosynthesis. Its function is as follows. Cell wall formation. Catalyzes the addition of glutamate to the nucleotide precursor UDP-N-acetylmuramoyl-L-alanine (UMA). The polypeptide is UDP-N-acetylmuramoylalanine--D-glutamate ligase (Chlorobium phaeobacteroides (strain BS1)).